Here is a 156-residue protein sequence, read N- to C-terminus: Succinate dehydrogenase assembly factor 2-B, mitochondrial (156 aa).

The N-terminal 12 residues, 1 to 12 (MLRQILSSAVAK), are a transit peptide targeting the mitochondrion.

This sequence belongs to the SDHAF2 family. Interacts with the flavoprotein subunit within the SDH catalytic dimer.

The protein resides in the mitochondrion matrix. Functionally, plays an essential role in the assembly of succinate dehydrogenase (SDH), an enzyme complex (also referred to as respiratory complex II) that is a component of both the tricarboxylic acid (TCA) cycle and the mitochondrial electron transport chain, and which couples the oxidation of succinate to fumarate with the reduction of ubiquinone (coenzyme Q) to ubiquinol. Required for flavinylation (covalent attachment of FAD) of the flavoprotein subunit of the SDH catalytic dimer. The protein is Succinate dehydrogenase assembly factor 2-B, mitochondrial of Drosophila willistoni (Fruit fly).